The chain runs to 521 residues: Cytochrome P450 1A1 (521 aa).

Phenylalanine 229 provides a ligand contact to substrate. Cysteine 463 serves as a coordination point for heme.

This sequence belongs to the cytochrome P450 family. It depends on heme as a cofactor.

It is found in the endoplasmic reticulum membrane. Its subcellular location is the microsome membrane. The catalysed reaction is an organic molecule + reduced [NADPH--hemoprotein reductase] + O2 = an alcohol + oxidized [NADPH--hemoprotein reductase] + H2O + H(+). In terms of biological role, cytochromes P450 are a group of heme-thiolate monooxygenases. They oxidize a variety of structurally unrelated compounds, including steroids, fatty acids, and xenobiotics. The protein is Cytochrome P450 1A1 (cyp1a1) of Limanda limanda (Common dab).